The sequence spans 67 residues: Large ribosomal subunit protein bL35 (67 aa).

Over residues 1–16 the composition is skewed to basic residues; that stretch reads MPKMKTKSGAKKRFRV. A disordered region spans residues 1–24; sequence MPKMKTKSGAKKRFRVRPGGTVKR.

It belongs to the bacterial ribosomal protein bL35 family.

The sequence is that of Large ribosomal subunit protein bL35 from Polaromonas naphthalenivorans (strain CJ2).